The sequence spans 269 residues: Proenkephalin-A (269 aa).

The first 24 residues, 1 to 24, serve as a signal peptide directing secretion; the sequence is MAQFLRLCIWLLALGSCLLATVQA. Disulfide bonds link Cys-26–Cys-48, Cys-30–Cys-52, and Cys-33–Cys-65. The disordered stretch occupies residues 165-191; the sequence is DNRAKDSHQQESTNNDEDSTSKRYGGF. 2 consecutive propeptides follow at residues 198–209 and 219–229; these read SPQLEDEAKELQ and VGRPEWWMDYQ. Ser-253 bears the Phosphoserine mark.

It belongs to the opioid neuropeptide precursor family. Post-translationally, proenkephalin-A is cleaved by CTSL to generate Met-enkephalin. Processed and degraded by ACE. In terms of processing, probably cleaved by ACE. Post-translationally, processed by ACE to generate Met-enkephalin in the nucleus accumbens of the brain. The N-terminal domain contains 6 conserved cysteines thought to be involved in disulfide bonding and/or processing. In terms of tissue distribution, expressed in brain, heart and testis.

It localises to the secreted. It is found in the cytoplasmic vesicle. The protein resides in the secretory vesicle. Its subcellular location is the chromaffin granule lumen. Its function is as follows. Neuropeptide that competes with and mimic the effects of opiate drugs. They play a role in a number of physiologic functions, including pain perception and responses to stress. In terms of biological role, met-enkephalin-Arg-Phe neuropeptide acts as a strong ligand of Mu-type opioid receptor OPRM1. Met-enkephalin-Arg-Phe-binding to OPRM1 in the nucleus accumbens of the brain increases activation of OPRM1, leading to long-term synaptic depression of glutamate release. Functionally, increases glutamate release in the striatum and decreases GABA concentration in the striatum. Increases glutamate release in the striatum. The sequence is that of Proenkephalin-A (Penk) from Rattus norvegicus (Rat).